A 233-amino-acid polypeptide reads, in one-letter code: Orotidine 5'-phosphate decarboxylase (233 aa).

Substrate contacts are provided by residues D11, K34, 61 to 70, T117, R179, Q189, G209, and R210; that span reads DLKLHDIPNT. K63 (proton donor) is an active-site residue.

Belongs to the OMP decarboxylase family. Type 1 subfamily. Homodimer.

The enzyme catalyses orotidine 5'-phosphate + H(+) = UMP + CO2. It functions in the pathway pyrimidine metabolism; UMP biosynthesis via de novo pathway; UMP from orotate: step 2/2. Catalyzes the decarboxylation of orotidine 5'-monophosphate (OMP) to uridine 5'-monophosphate (UMP). The chain is Orotidine 5'-phosphate decarboxylase from Streptococcus agalactiae serotype Ia (strain ATCC 27591 / A909 / CDC SS700).